The sequence spans 642 residues: Threonine--tRNA ligase (642 aa).

The TGS domain maps to 1 to 61 (MPVITLPDGS…ETDAELSIIT (61 aa)). The tract at residues 243 to 534 (DHRKIGKQLD…LIEEYAGRFP (292 aa)) is catalytic. Cys334, His385, and His511 together coordinate Zn(2+).

This sequence belongs to the class-II aminoacyl-tRNA synthetase family. In terms of assembly, homodimer. It depends on Zn(2+) as a cofactor.

The protein localises to the cytoplasm. It carries out the reaction tRNA(Thr) + L-threonine + ATP = L-threonyl-tRNA(Thr) + AMP + diphosphate + H(+). Its function is as follows. Catalyzes the attachment of threonine to tRNA(Thr) in a two-step reaction: L-threonine is first activated by ATP to form Thr-AMP and then transferred to the acceptor end of tRNA(Thr). Also edits incorrectly charged L-seryl-tRNA(Thr). This chain is Threonine--tRNA ligase, found in Shewanella oneidensis (strain ATCC 700550 / JCM 31522 / CIP 106686 / LMG 19005 / NCIMB 14063 / MR-1).